The primary structure comprises 735 residues: Probable ATP-dependent RNA helicase DHR2 (735 aa).

A compositionally biased stretch (polar residues) spans 1 to 13 (MAANSNSRVASNH). A disordered region spans residues 1-29 (MAANSNSRVASNHTSKKQKVRRNIHPFTN). Basic residues predominate over residues 14-24 (TSKKQKVRRNI). One can recognise a Helicase ATP-binding domain in the interval 91 to 257 (MSYIESNPVT…FNNAPILFVE (167 aa)). ATP is bound at residue 104–111 (GETGSGKS). The short motif at 203-206 (DEAH) is the DEAH box element. A Helicase C-terminal domain is found at 262-456 (DVKQYYLKAP…SPVLMLKRYG (195 aa)).

Belongs to the DEAD box helicase family. DEAH subfamily. In terms of assembly, interacts with NOP19. Interacts with UBP10.

The protein localises to the nucleus. It localises to the nucleolus. The enzyme catalyses ATP + H2O = ADP + phosphate + H(+). In terms of biological role, probable ATP-binding RNA helicase. Required for 18S rRNA synthesis. The polypeptide is Probable ATP-dependent RNA helicase DHR2 (DHR2) (Saccharomyces cerevisiae (strain ATCC 204508 / S288c) (Baker's yeast)).